Reading from the N-terminus, the 379-residue chain is Class V chitinase CHIT5b (379 aa).

Residues 1–26 (MANILNLKHLLTLALILLALATKSST) form the signal peptide. Positions 34–379 (RVKGIYWLEN…TQASKAWKLV (346 aa)) constitute a GH18 domain. Residues N68, N109, and N128 are each glycosylated (N-linked (GlcNAc...) asparagine). E147 acts as the Proton donor in catalysis. 3 N-linked (GlcNAc...) asparagine glycosylation sites follow: N192, N227, and N241.

This sequence belongs to the glycosyl hydrolase 18 family. Chitinase class V subfamily.

The enzyme catalyses Random endo-hydrolysis of N-acetyl-beta-D-glucosaminide (1-&gt;4)-beta-linkages in chitin and chitodextrins.. It participates in glycan degradation; chitin degradation. Possesses chitinase activity in vitro toward glycol chitin, carboxymethyl-chitin, colloidal chitin, and the chitin oligosaccharides (N-acetylglucosamine) (GlcNAc)6 and (GlcNAc)5. Hydrolyzes (GlcNAc)6 into (GlcNAc)4 and (GlcNAc)2, or two (GlcNAc)3 molecules. Has the capacity to reduce hyphal growth of the fungus Trichoderma viride in an agar-plate bioassay. The protein is Class V chitinase CHIT5b of Medicago truncatula (Barrel medic).